Reading from the N-terminus, the 278-residue chain is Potassium/proton antiporter CemA (278 aa).

The next 4 membrane-spanning stretches (helical) occupy residues 61-81, 155-175, 203-223, and 238-258; these read IFLLLISPVLVNQASKFFDFG, AVKNILSDILSIAVFILLMIT, IILFTDMFVGFHSPHGWEVII, and FIFLFISTFPVILDTIFKYWI.

This sequence belongs to the CemA family.

Its subcellular location is the plastid. The protein resides in the chloroplast inner membrane. The catalysed reaction is K(+)(in) + H(+)(out) = K(+)(out) + H(+)(in). Functionally, contributes to K(+)/H(+) antiport activity by supporting proton efflux to control proton extrusion and homeostasis in chloroplasts in a light-dependent manner to modulate photosynthesis. Prevents excessive induction of non-photochemical quenching (NPQ) under continuous-light conditions. Indirectly promotes efficient inorganic carbon uptake into chloroplasts. This chain is Potassium/proton antiporter CemA, found in Porphyra purpurea (Red seaweed).